Consider the following 396-residue polypeptide: Elongation factor Tu 2 (396 aa).

Positions 10–206 constitute a tr-type G domain; sequence KPHVNVGTIG…ALDTYIPTPE (197 aa). Residues 19 to 26 are G1; sequence GHVDHGKT. Residue 19–26 participates in GTP binding; it reads GHVDHGKT. Thr-26 is a binding site for Mg(2+). The G2 stretch occupies residues 60–64; that stretch reads GITIN. The segment at 81–84 is G3; sequence DCPG. GTP is bound by residues 81–85 and 136–139; these read DCPGH and NKCD. A G4 region spans residues 136 to 139; the sequence is NKCD. The interval 174–176 is G5; that stretch reads SAK.

It belongs to the TRAFAC class translation factor GTPase superfamily. Classic translation factor GTPase family. EF-Tu/EF-1A subfamily. In terms of assembly, monomer.

Its subcellular location is the cytoplasm. The enzyme catalyses GTP + H2O = GDP + phosphate + H(+). GTP hydrolase that promotes the GTP-dependent binding of aminoacyl-tRNA to the A-site of ribosomes during protein biosynthesis. This is Elongation factor Tu 2 from Acidovorax sp. (strain JS42).